The sequence spans 355 residues: NADH dehydrogenase-like protein YutJ (355 aa).

The protein belongs to the NADH dehydrogenase family. It depends on FAD as a cofactor.

This chain is NADH dehydrogenase-like protein YutJ (yutJ), found in Bacillus subtilis (strain 168).